The sequence spans 237 residues: Ribonuclease PH (237 aa).

Residues Arg86 and 124–126 each bind phosphate; that span reads GTR.

The protein belongs to the RNase PH family. In terms of assembly, homohexameric ring arranged as a trimer of dimers.

The catalysed reaction is tRNA(n+1) + phosphate = tRNA(n) + a ribonucleoside 5'-diphosphate. Phosphorolytic 3'-5' exoribonuclease that plays an important role in tRNA 3'-end maturation. Removes nucleotide residues following the 3'-CCA terminus of tRNAs; can also add nucleotides to the ends of RNA molecules by using nucleoside diphosphates as substrates, but this may not be physiologically important. Probably plays a role in initiation of 16S rRNA degradation (leading to ribosome degradation) during starvation. This Shewanella baltica (strain OS223) protein is Ribonuclease PH.